Consider the following 194-residue polypeptide: Chromophore lyase CpcT/CpeT 1 (194 aa).

It belongs to the CpcT/CpeT biliprotein lyase family.

Functionally, covalently attaches a chromophore to Cys residue(s) of phycobiliproteins. In Microcystis aeruginosa (strain NIES-843 / IAM M-2473), this protein is Chromophore lyase CpcT/CpeT 1.